A 526-amino-acid polypeptide reads, in one-letter code: Peptide chain release factor 3 (526 aa).

Positions 11 to 277 (SKRRTFAIIS…SLIKWAPSPL (267 aa)) constitute a tr-type G domain. Residues 20-27 (SHPDAGKT), 88-92 (DTPGH), and 142-145 (NKLD) contribute to the GTP site.

The protein belongs to the TRAFAC class translation factor GTPase superfamily. Classic translation factor GTPase family. PrfC subfamily.

The protein localises to the cytoplasm. Its function is as follows. Increases the formation of ribosomal termination complexes and stimulates activities of RF-1 and RF-2. It binds guanine nucleotides and has strong preference for UGA stop codons. It may interact directly with the ribosome. The stimulation of RF-1 and RF-2 is significantly reduced by GTP and GDP, but not by GMP. This chain is Peptide chain release factor 3, found in Buchnera aphidicola subsp. Acyrthosiphon pisum (strain Tuc7).